We begin with the raw amino-acid sequence, 333 residues long: Large ribosomal subunit protein mL44 (333 aa).

Residues M1–G30 constitute a mitochondrion transit peptide. The region spanning D86–L228 is the RNase III domain. Residues N236–G306 enclose the DRBM domain. Positions R311 to E327 are enriched in basic and acidic residues. Residues R311–S333 form a disordered region.

The protein belongs to the ribonuclease III family. Mitochondrion-specific ribosomal protein mL44 subfamily. As to quaternary structure, component of the mitochondrial ribosome large subunit (39S) which comprises a 16S rRNA and about 50 distinct proteins.

It localises to the mitochondrion. Its function is as follows. Component of the 39S subunit of mitochondrial ribosome. May have a function in the assembly/stability of nascent mitochondrial polypeptides exiting the ribosome. The chain is Large ribosomal subunit protein mL44 (Mrpl44) from Mus musculus (Mouse).